An 811-amino-acid polypeptide reads, in one-letter code: Elongation factor G, mitochondrial (811 aa).

The N-terminal 64 residues, 1–64, are a transit peptide targeting the mitochondrion; the sequence is MSAIARAAAR…FQQSFQRRWA (64 aa). The 299-residue stretch at 96-394 folds into the tr-type G domain; it reads RRQRNVGISA…GVCAYLPNPS (299 aa). GTP is bound by residues 105–112, 192–196, and 246–249; these read AHIDSGKT, DTPGH, and NKMD.

Belongs to the TRAFAC class translation factor GTPase superfamily. Classic translation factor GTPase family. EF-G/EF-2 subfamily.

It is found in the mitochondrion. It functions in the pathway protein biosynthesis; polypeptide chain elongation. Its function is as follows. Mitochondrial GTPase that catalyzes the GTP-dependent ribosomal translocation step during translation elongation. During this step, the ribosome changes from the pre-translocational (PRE) to the post-translocational (POST) state as the newly formed A-site-bound peptidyl-tRNA and P-site-bound deacylated tRNA move to the P and E sites, respectively. Catalyzes the coordinated movement of the two tRNA molecules, the mRNA and conformational changes in the ribosome. This is Elongation factor G, mitochondrial from Cryptococcus neoformans var. neoformans serotype D (strain JEC21 / ATCC MYA-565) (Filobasidiella neoformans).